The primary structure comprises 348 residues: D-alanine--D-alanine ligase (348 aa).

The ATP-grasp domain occupies 132–334 (KRVLESIGIP…YPDLIEELVT (203 aa)). 162 to 217 (LARLTFPIFVKPANMGSSVGISKAQTKVELRKAIQLALTYDSRVLIEQGVVAREIE) lines the ATP pocket. Residues aspartate 288, glutamate 301, and asparagine 303 each coordinate Mg(2+).

The protein belongs to the D-alanine--D-alanine ligase family. The cofactor is Mg(2+). It depends on Mn(2+) as a cofactor.

The protein resides in the cytoplasm. It catalyses the reaction 2 D-alanine + ATP = D-alanyl-D-alanine + ADP + phosphate + H(+). It participates in cell wall biogenesis; peptidoglycan biosynthesis. Cell wall formation. The chain is D-alanine--D-alanine ligase from Streptococcus pyogenes serotype M12 (strain MGAS2096).